An 84-amino-acid polypeptide reads, in one-letter code: MSDKIRTLQGRVVSDKMEKSIVVAIERFVKHPIYGKFIKRTTKLHVHDENNDSNIGDIVEISECRPISKTKSWTLVRVVEKAIL.

It belongs to the universal ribosomal protein uS17 family. As to quaternary structure, part of the 30S ribosomal subunit.

Its function is as follows. One of the primary rRNA binding proteins, it binds specifically to the 5'-end of 16S ribosomal RNA. The sequence is that of Small ribosomal subunit protein uS17 from Sodalis glossinidius (strain morsitans).